Reading from the N-terminus, the 195-residue chain is Pyruvoyl-dependent arginine decarboxylase AaxB (195 aa).

Ser53 is subject to Pyruvic acid (Ser).

It belongs to the pyruvoyl-dependent arginine decarboxylase family. As to quaternary structure, trimer of an alpha-beta dimer. The cofactor is pyruvate.

The protein localises to the cytoplasm. The enzyme catalyses L-arginine + H(+) = agmatine + CO2. Inhibited by argininamide. Functionally, part of the AaxABC system, catalyzes the decarboxylation of L-arginine. The arginine uptake by the bacterium in the macrophage may be a virulence factor against the host innate immune response. This chain is Pyruvoyl-dependent arginine decarboxylase AaxB (aaxB), found in Chlamydia pneumoniae (Chlamydophila pneumoniae).